The following is a 706-amino-acid chain: Triadin (706 aa).

The segment at 1–28 is disordered; the sequence is MTEITAEGNASTTTTVIDSKNGSVPKSP. The Cytoplasmic portion of the chain corresponds to 1–47; sequence MTEITAEGNASTTTTVIDSKNGSVPKSPGKVLKRTVTEDLVTTFSSP. Positions 8–24 are enriched in polar residues; sequence GNASTTTTVIDSKNGSV. A helical transmembrane segment spans residues 48–68; that stretch reads AAWLLVIALIITWSAVAVVMF. The Lumenal segment spans residues 69 to 706; it reads DLVDYKNFSA…GKPNSPGPKQ (638 aa). Asn75 carries an N-linked (GlcNAc...) asparagine glycan. Acidic residues predominate over residues 117–127; it reads DGDEEDDEGDE. 3 disordered regions span residues 117-265, 281-663, and 684-706; these read DGDE…EQKD, DLKP…KKQK, and FPVT…GPKQ. 7 stretches are compositionally biased toward basic and acidic residues: residues 128–254, 309–358, 372–432, 443–518, 525–552, 570–588, and 599–621; these read DTAK…ESKE, PEEK…KSPD, TKKD…KEEV, AKKE…EVKP, IKKE…EKVL, KKAE…DKPK, and ESGK…RESH. An N-linked (GlcNAc...) asparagine glycan is attached at Asn625. Basic and acidic residues predominate over residues 628–651; that stretch reads KAEKPARGSKEGFEDVPASKKAKE.

As to quaternary structure, interacts with CASQ2. Homooligomer of variable subunit number; disulfide-linked. Interacts with CASQ1 and RYR1 in skeletal muscle. In terms of processing, phosphorylated by CaMK2. Post-translationally, N-glycosylated. As to expression, detected in skeletal muscle and in heart (at protein level). Detected in skeletal muscle and in heart.

The protein resides in the sarcoplasmic reticulum membrane. Its function is as follows. Contributes to the regulation of lumenal Ca2+ release via the sarcoplasmic reticulum calcium release channels RYR1 and RYR2, a key step in triggering skeletal and heart muscle contraction. Required for normal organization of the triad junction, where T-tubules and the sarcoplasmic reticulum terminal cisternae are in close contact. Required for normal skeletal muscle strength. Plays a role in excitation-contraction coupling in the heart and in regulating the rate of heart beats. This is Triadin (TRDN) from Oryctolagus cuniculus (Rabbit).